The sequence spans 391 residues: DNA/RNA-binding protein KIN17 (391 aa).

A C2H2-type zinc finger spans residues 28–50 (CQMCQKQCRDENGFKCHCMSESH). A winged helix-turn-helix (wHTH) region spans residues 51–160 (QRQLLLASEN…RQLELEKKKK (110 aa)). Lys135 carries the post-translational modification N6,N6,N6-trimethyllysine; by METTL22; alternate. The residue at position 135 (Lys135) is an N6-methyllysine; alternate. Coiled coils occupy residues 147 to 180 (ETIRRQLELEKKKKQDLDDEEKTAKFIEEQVRRG) and 252 to 275 (AKKKKSALDEIMELEEEKKRTART). Residues 206 to 258 (NLNKGAGGSAGATTSKSSSLGPSALKLLGSAASGKRKESSQSSAQPAKKKKSA) are disordered. The C-terminal subdomain A stretch occupies residues 282–332 (GIVVKIITKKLGEKYHKKKGVVKEVIDRYTAVVKMTDSGDRLKLDQTHLET). The tract at residues 338-389 (GKRVLVLNGGYRGNEGTLESINEKAFSATIVIETGPLKGRRVEGIQYEDISK) is C-terminal subdomain B.

This sequence belongs to the KIN17 family. Associated with DNA polymerase alpha, RFC1 and cyclin A, in multiprotein DNA replication complexes. Also associates with replication origins at the G1/S phase boundary and throughout the S phase in vivo. As to expression, highly expressed in transformed mouse AtT20 neuroendocrine cells. Expressed at a lower level in testis, kidney, skeletal muscle, liver, lung, spleen, brain and heart and kidney. In testis, expressed at much higher levels in proliferating cells than in differentiating cells. Not detected in embryo.

It is found in the nucleus. Its subcellular location is the cytoplasm. Its function is as follows. Involved in DNA replication and the cellular response to DNA damage. May participate in DNA replication factories and create a bridge between DNA replication and repair mediated by high molecular weight complexes. May play a role in illegitimate recombination and regulation of gene expression. May participate in mRNA processing. Binds, in vitro, to double-stranded DNA. Also shown to bind preferentially to curved DNA in vitro and in vivo. Binds via its C-terminal domain to RNA in vitro. The polypeptide is DNA/RNA-binding protein KIN17 (Mus musculus (Mouse)).